We begin with the raw amino-acid sequence, 549 residues long: Glucose-6-phosphate isomerase (549 aa).

Catalysis depends on E355, which acts as the Proton donor. Catalysis depends on residues H386 and K514.

This sequence belongs to the GPI family.

The protein localises to the cytoplasm. It carries out the reaction alpha-D-glucose 6-phosphate = beta-D-fructose 6-phosphate. It functions in the pathway carbohydrate biosynthesis; gluconeogenesis. Its pathway is carbohydrate degradation; glycolysis; D-glyceraldehyde 3-phosphate and glycerone phosphate from D-glucose: step 2/4. Its function is as follows. Catalyzes the reversible isomerization of glucose-6-phosphate to fructose-6-phosphate. The sequence is that of Glucose-6-phosphate isomerase from Salmonella agona (strain SL483).